Here is a 1116-residue protein sequence, read N- to C-terminus: DUB-associated factor 1 (1116 aa).

WD repeat units follow at residues 21–62 (AHIL…NEPE), 91–132 (KNSD…DHDD), 160–200 (VHDG…EKMA), 219–262 (SMSP…EVIR), 266–305 (AHRT…DQTT), 387–426 (KKYG…FSVN), and 428–466 (GGFA…LLNT). The disordered stretch occupies residues 578–600 (LDTGYNSESKKNNKDKKRKSTFK). A Phosphoserine modification is found at Ser668. Residue Thr693 is modified to Phosphothreonine. Polar residues predominate over residues 747-776 (ISSQDLPSNNTHNKLRSSENSRANSTSTLE). Disordered stretches follow at residues 747-784 (ISSQ…KKPE) and 963-994 (FISA…PSTQ). Over residues 967 to 987 (SDTTESSGNDSSDSSLGNGNE) the composition is skewed to low complexity.

Interacts (via its WD repeats) with ubiquitin.

Its subcellular location is the cytoplasm. Its function is as follows. Ubiquitin-binding protein involved in the resistance to phenanthroline, sanguinarine, nordihydroguaiaretic acid (NDGA), isopropyl (N-3-chloro-phenyl)-carbamate (IPCPC) and guanosine 5'-O-(2-thiodiphosphate). This Saccharomyces cerevisiae (strain ATCC 204508 / S288c) (Baker's yeast) protein is DUB-associated factor 1.